Here is a 158-residue protein sequence, read N- to C-terminus: SsrA-binding protein (158 aa).

It belongs to the SmpB family.

The protein resides in the cytoplasm. In terms of biological role, required for rescue of stalled ribosomes mediated by trans-translation. Binds to transfer-messenger RNA (tmRNA), required for stable association of tmRNA with ribosomes. tmRNA and SmpB together mimic tRNA shape, replacing the anticodon stem-loop with SmpB. tmRNA is encoded by the ssrA gene; the 2 termini fold to resemble tRNA(Ala) and it encodes a 'tag peptide', a short internal open reading frame. During trans-translation Ala-aminoacylated tmRNA acts like a tRNA, entering the A-site of stalled ribosomes, displacing the stalled mRNA. The ribosome then switches to translate the ORF on the tmRNA; the nascent peptide is terminated with the 'tag peptide' encoded by the tmRNA and targeted for degradation. The ribosome is freed to recommence translation, which seems to be the essential function of trans-translation. The polypeptide is SsrA-binding protein (Bartonella tribocorum (strain CIP 105476 / IBS 506)).